The chain runs to 334 residues: MATLLAPAFELPTSLHSLTNLADSRIGAQIVECSDDFFAEAKRMLQFEAPIFVEDKFDDHGKWMDGWETRRKRHAGYDWCIVKLGVAGKIKAVDIDTTFFTGNYPASASLEGCYAPNGNTQEALWQPLLGNSILGPSQHHVFDVQNDAIFTHIRLNIFPDGGVARLRIYGDVQIQITDTDQTLDLLALQNGGRVIAYSDAHFGHPRNLINPGRGVNMGDGWETKRRRAPGFDWCLLALGQAGKIEKIEIDTAHFKGNYPAQVSIQAIYIEDATDPQLIPQSMFWPFLLEAQDMQMDHIHSYLNEVLAHEKVSHIRVNMIPDGGISRVRLWGKVV.

Belongs to the allantoicase family.

It carries out the reaction allantoate + H2O = (S)-ureidoglycolate + urea. Its pathway is nitrogen metabolism; (S)-allantoin degradation; (S)-ureidoglycolate from allantoate (aminidohydrolase route): step 1/1. This chain is Probable allantoicase, found in Acinetobacter baylyi (strain ATCC 33305 / BD413 / ADP1).